We begin with the raw amino-acid sequence, 323 residues long: Putative HTH-type transcriptional regulatory protein Hlac_0273 (323 aa).

The HTH cro/C1-type domain maps to 132–189 (LADEREERGWSLGRLATELGVSRRTVSKYEDGMNASIEVAIQLEDLFNEPFSSPVDVL). Residues 143–162 (LGRLATELGVSRRTVSKYED) constitute a DNA-binding region (H-T-H motif). Residues 188–211 (VLDGAGEVRDADPTPSAPETDPDD) are disordered.

The chain is Putative HTH-type transcriptional regulatory protein Hlac_0273 from Halorubrum lacusprofundi (strain ATCC 49239 / DSM 5036 / JCM 8891 / ACAM 34).